The primary structure comprises 914 residues: Protein translocase subunit SecA (914 aa).

Residues Q87, 105–109, and D508 contribute to the ATP site; that span reads GEGKT. Residues C898, C900, C909, and H910 each contribute to the Zn(2+) site.

It belongs to the SecA family. In terms of assembly, monomer and homodimer. Part of the essential Sec protein translocation apparatus which comprises SecA, SecYEG and auxiliary proteins SecDF-YajC and YidC. Zn(2+) is required as a cofactor.

The protein localises to the cell inner membrane. It is found in the cytoplasm. The catalysed reaction is ATP + H2O + cellular proteinSide 1 = ADP + phosphate + cellular proteinSide 2.. Part of the Sec protein translocase complex. Interacts with the SecYEG preprotein conducting channel. Has a central role in coupling the hydrolysis of ATP to the transfer of proteins into and across the cell membrane, serving both as a receptor for the preprotein-SecB complex and as an ATP-driven molecular motor driving the stepwise translocation of polypeptide chains across the membrane. The protein is Protein translocase subunit SecA of Xylella fastidiosa (strain M23).